The following is a 70-amino-acid chain: Protein SlyX homolog (70 aa).

A disordered region spans residues 51 to 70 (RMREAEANRPGPTNEPPPHY).

This sequence belongs to the SlyX family.

This is Protein SlyX homolog from Nitrobacter hamburgensis (strain DSM 10229 / NCIMB 13809 / X14).